The chain runs to 382 residues: Protein PEP-RELATED DEVELOPMENT ARRESTED 1 homolog, chloroplastic (382 aa).

Residues 1 to 44 constitute a chloroplast transit peptide; sequence MAILPLSISHSLTSALSATSSGIGRPVARLLHPRVPSRPTVICL.

It localises to the plastid. The protein resides in the chloroplast stroma. Its subcellular location is the chloroplast nucleoid. In terms of biological role, plays an essential role in early steps of chloroplast development. May be involved in the redox control of plastid gene expression by maintening the redox state around chloroplast nucleoids. May positively regulate plastid-encoded RNA polymerase (PEP) activity. This is Protein PEP-RELATED DEVELOPMENT ARRESTED 1 homolog, chloroplastic from Oryza sativa subsp. japonica (Rice).